The primary structure comprises 422 residues: Glyceraldehyde-3-phosphate dehydrogenase GAPCP1, chloroplastic (422 aa).

A chloroplast-targeting transit peptide spans 1 to 69; the sequence is MAFSSLLRSA…NARSVQPIKA (69 aa). Positions 50 to 63 are enriched in polar residues; it reads SGISSSLQNGNARS. A disordered region spans residues 50-84; sequence SGISSSLQNGNARSVQPIKATATEVPSAVRRSSSS. An N-acetylthreonine modification is found at threonine 70. NAD(+) contacts are provided by residues 96–97, aspartate 118, and arginine 164; that span reads RI. Residues 235–237, threonine 266, 295–296, and arginine 318 each bind D-glyceraldehyde 3-phosphate; these read SCT and TG. Cysteine 236 acts as the Nucleophile in catalysis. Asparagine 400 contacts NAD(+).

The protein belongs to the glyceraldehyde-3-phosphate dehydrogenase family. Homotetramer. In terms of tissue distribution, expressed in shoot and root vasculature, leaf veins and vascular tissue of flowers and siliques.

Its subcellular location is the plastid. It localises to the chloroplast stroma. It carries out the reaction D-glyceraldehyde 3-phosphate + phosphate + NAD(+) = (2R)-3-phospho-glyceroyl phosphate + NADH + H(+). Involved in plastidial glycolytic pathway and plays a specific role in glycolytic energy production in non-green plastids and chloroplasts. Essential for breakdown of starch to form sucrose for export to non-photosynthetic tissues, and to generate primary metabolites for anabolic pathways such as fatty acid and amino acid synthesis. Plays an important role in plant development by providing substrates for the phosphorylated pathway of serine biosynthesis in roots. Plays a crucial role in pollen development. Functionally redundant with GAPCP2. The polypeptide is Glyceraldehyde-3-phosphate dehydrogenase GAPCP1, chloroplastic (GAPCP1) (Arabidopsis thaliana (Mouse-ear cress)).